The sequence spans 47 residues: Lysis protein for colicin E8 (47 aa).

The signal sequence occupies residues 1–19 (MKKITGIILLLLAVIILAA). C20 is lipidated: N-palmitoyl cysteine. C20 is lipidated: S-diacylglycerol cysteine.

The protein localises to the cell outer membrane. Lysis proteins are required for both colicin release and partial cell lysis. This Escherichia coli protein is Lysis protein for colicin E8 (lys).